The primary structure comprises 135 residues: Large ribosomal subunit protein uL22 (135 aa).

The protein belongs to the universal ribosomal protein uL22 family. As to quaternary structure, part of the 50S ribosomal subunit.

Functionally, this protein binds specifically to 23S rRNA; its binding is stimulated by other ribosomal proteins, e.g. L4, L17, and L20. It is important during the early stages of 50S assembly. It makes multiple contacts with different domains of the 23S rRNA in the assembled 50S subunit and ribosome. In terms of biological role, the globular domain of the protein is located near the polypeptide exit tunnel on the outside of the subunit, while an extended beta-hairpin is found that lines the wall of the exit tunnel in the center of the 70S ribosome. The protein is Large ribosomal subunit protein uL22 of Malacoplasma penetrans (strain HF-2) (Mycoplasma penetrans).